Here is a 526-residue protein sequence, read N- to C-terminus: MLO-like protein 1 (526 aa).

Over methionine 1 to glutamate 11 the chain is Extracellular. Residues phenylalanine 12–valine 32 traverse the membrane as a helical segment. Topologically, residues glutamate 33–glutamate 61 are cytoplasmic. Residues leucine 62–phenylalanine 82 form a helical membrane-spanning segment. The Extracellular segment spans residues cysteine 83–histidine 160. The chain crosses the membrane as a helical span at residues isoleucine 161 to glycine 181. Residues serine 182–glutamine 287 lie on the Cytoplasmic side of the membrane. 2 consecutive transmembrane segments (helical) span residues valine 288 to asparagine 308 and glycine 309 to threonine 329. The Cytoplasmic portion of the chain corresponds to lysine 330–tyrosine 372. A helical transmembrane segment spans residues leucine 373–valine 393. Residues threonine 394–leucine 412 lie on the Extracellular side of the membrane. The helical transmembrane segment at valine 413–valine 433 threads the bilayer. At serine 434–asparagine 526 the chain is on the cytoplasmic side. Residues glutamate 447–alanine 468 are calmodulin-binding. The segment at serine 471–asparagine 526 is disordered. Positions glycine 476–glycine 495 are enriched in low complexity. Positions serine 506–isoleucine 520 are enriched in polar residues.

Belongs to the MLO family.

It localises to the cell membrane. Its function is as follows. May be involved in modulation of pathogen defense and leaf cell death. Activity seems to be regulated by Ca(2+)-dependent calmodulin binding and seems not to require heterotrimeric G proteins. The protein is MLO-like protein 1 (MLO1) of Arabidopsis thaliana (Mouse-ear cress).